The sequence spans 188 residues: Pyridoxal 5'-phosphate synthase subunit PdxT (188 aa).

Residue 47-49 participates in L-glutamine binding; the sequence is GES. Cys79 acts as the Nucleophile in catalysis. L-glutamine-binding positions include Arg105 and 134–135; that span reads IR. Catalysis depends on charge relay system residues His170 and Glu172.

The protein belongs to the glutaminase PdxT/SNO family. In terms of assembly, in the presence of PdxS, forms a dodecamer of heterodimers. Only shows activity in the heterodimer.

The catalysed reaction is aldehydo-D-ribose 5-phosphate + D-glyceraldehyde 3-phosphate + L-glutamine = pyridoxal 5'-phosphate + L-glutamate + phosphate + 3 H2O + H(+). It catalyses the reaction L-glutamine + H2O = L-glutamate + NH4(+). The protein operates within cofactor biosynthesis; pyridoxal 5'-phosphate biosynthesis. Functionally, catalyzes the hydrolysis of glutamine to glutamate and ammonia as part of the biosynthesis of pyridoxal 5'-phosphate. The resulting ammonia molecule is channeled to the active site of PdxS. The protein is Pyridoxal 5'-phosphate synthase subunit PdxT of Listeria monocytogenes serotype 4b (strain F2365).